The chain runs to 190 residues: Holliday junction branch migration complex subunit RuvA (190 aa).

The segment at 1 to 64 (MIGRITGTLI…EDAHILYGFA (64 aa)) is domain I. Positions 65–137 (TAAERGAFRE…MRGKLGADIG (73 aa)) are domain II. The tract at residues 137 to 141 (GATAH) is flexible linker. Residues 142 to 190 (AVPDSQTDILNALLALGYSDKESQAALKKLPEGTGVSEGIRLALKALVR) form a domain III region.

It belongs to the RuvA family. In terms of assembly, homotetramer. Forms an RuvA(8)-RuvB(12)-Holliday junction (HJ) complex. HJ DNA is sandwiched between 2 RuvA tetramers; dsDNA enters through RuvA and exits via RuvB. An RuvB hexamer assembles on each DNA strand where it exits the tetramer. Each RuvB hexamer is contacted by two RuvA subunits (via domain III) on 2 adjacent RuvB subunits; this complex drives branch migration. In the full resolvosome a probable DNA-RuvA(4)-RuvB(12)-RuvC(2) complex forms which resolves the HJ.

It localises to the cytoplasm. Functionally, the RuvA-RuvB-RuvC complex processes Holliday junction (HJ) DNA during genetic recombination and DNA repair, while the RuvA-RuvB complex plays an important role in the rescue of blocked DNA replication forks via replication fork reversal (RFR). RuvA specifically binds to HJ cruciform DNA, conferring on it an open structure. The RuvB hexamer acts as an ATP-dependent pump, pulling dsDNA into and through the RuvAB complex. HJ branch migration allows RuvC to scan DNA until it finds its consensus sequence, where it cleaves and resolves the cruciform DNA. The polypeptide is Holliday junction branch migration complex subunit RuvA (Bordetella petrii (strain ATCC BAA-461 / DSM 12804 / CCUG 43448)).